The primary structure comprises 63 residues: Large ribosomal subunit protein bL33m (63 aa).

Belongs to the bacterial ribosomal protein bL33 family.

The protein localises to the mitochondrion. The chain is Large ribosomal subunit protein bL33m (mrpl33) from Dictyostelium discoideum (Social amoeba).